The chain runs to 567 residues: Asparagine--tRNA ligase, chloroplastic/mitochondrial (567 aa).

Residues 113-191 constitute a DNA-binding region (OB); it reads NIMGWVRTLR…VELKVEKIIV (79 aa).

Belongs to the class-II aminoacyl-tRNA synthetase family.

The protein localises to the plastid. The protein resides in the chloroplast. It is found in the mitochondrion. The catalysed reaction is tRNA(Asn) + L-asparagine + ATP = L-asparaginyl-tRNA(Asn) + AMP + diphosphate + H(+). This chain is Asparagine--tRNA ligase, chloroplastic/mitochondrial, found in Arabidopsis thaliana (Mouse-ear cress).